The sequence spans 137 residues: FAD synthase (137 aa).

Residues 5–6, 10–13, and Asp-88 each bind ATP; these read TF and HPGH.

This sequence belongs to the archaeal FAD synthase family. In terms of assembly, homodimer. The cofactor is a divalent metal cation.

The enzyme catalyses FMN + ATP + H(+) = FAD + diphosphate. It participates in cofactor biosynthesis; FAD biosynthesis; FAD from FMN: step 1/1. Catalyzes the transfer of the AMP portion of ATP to flavin mononucleotide (FMN) to produce flavin adenine dinucleotide (FAD) coenzyme. The protein is FAD synthase of Archaeoglobus fulgidus (strain ATCC 49558 / DSM 4304 / JCM 9628 / NBRC 100126 / VC-16).